A 289-amino-acid polypeptide reads, in one-letter code: Shikimate dehydrogenase (NADP(+)) (289 aa).

Shikimate-binding positions include 20 to 22 (SIS) and Ser67. Lys71 functions as the Proton acceptor in the catalytic mechanism. The shikimate site is built by Asn92 and Asp107. Residues 132–136 (GGGGA) and Val230 contribute to the NADP(+) site. Tyr232 contributes to the shikimate binding site. Residue Gly253 coordinates NADP(+).

This sequence belongs to the shikimate dehydrogenase family. As to quaternary structure, homodimer.

It carries out the reaction shikimate + NADP(+) = 3-dehydroshikimate + NADPH + H(+). It functions in the pathway metabolic intermediate biosynthesis; chorismate biosynthesis; chorismate from D-erythrose 4-phosphate and phosphoenolpyruvate: step 4/7. Functionally, involved in the biosynthesis of the chorismate, which leads to the biosynthesis of aromatic amino acids. Catalyzes the reversible NADPH linked reduction of 3-dehydroshikimate (DHSA) to yield shikimate (SA). This is Shikimate dehydrogenase (NADP(+)) from Streptococcus mutans serotype c (strain ATCC 700610 / UA159).